A 216-amino-acid chain; its full sequence is Pyridoxine/pyridoxamine 5'-phosphate oxidase (216 aa).

FMN-binding positions include 64-69, 79-80, lysine 85, lysine 86, and glutamine 108; these read RVVLLK and FT. Lysine 69 contributes to the substrate binding site. Residues tyrosine 126, arginine 130, and serine 134 each contribute to the substrate site. FMN contacts are provided by residues 143–144 and tryptophan 188; that span reads QS. Substrate is bound at residue 194–196; sequence RKH. Arginine 198 contributes to the FMN binding site.

The protein belongs to the pyridoxamine 5'-phosphate oxidase family. Homodimer. FMN is required as a cofactor.

The enzyme catalyses pyridoxamine 5'-phosphate + O2 + H2O = pyridoxal 5'-phosphate + H2O2 + NH4(+). It catalyses the reaction pyridoxine 5'-phosphate + O2 = pyridoxal 5'-phosphate + H2O2. It functions in the pathway cofactor metabolism; pyridoxal 5'-phosphate salvage; pyridoxal 5'-phosphate from pyridoxamine 5'-phosphate: step 1/1. The protein operates within cofactor metabolism; pyridoxal 5'-phosphate salvage; pyridoxal 5'-phosphate from pyridoxine 5'-phosphate: step 1/1. Functionally, catalyzes the oxidation of either pyridoxine 5'-phosphate (PNP) or pyridoxamine 5'-phosphate (PMP) into pyridoxal 5'-phosphate (PLP). This Wolbachia pipientis wMel protein is Pyridoxine/pyridoxamine 5'-phosphate oxidase.